A 293-amino-acid polypeptide reads, in one-letter code: Acetylglutamate kinase (293 aa).

Residues 71-72, R93, and N186 each bind substrate; that span reads GG.

This sequence belongs to the acetylglutamate kinase family. ArgB subfamily.

Its subcellular location is the cytoplasm. The enzyme catalyses N-acetyl-L-glutamate + ATP = N-acetyl-L-glutamyl 5-phosphate + ADP. It functions in the pathway amino-acid biosynthesis; L-arginine biosynthesis; N(2)-acetyl-L-ornithine from L-glutamate: step 2/4. Catalyzes the ATP-dependent phosphorylation of N-acetyl-L-glutamate. This chain is Acetylglutamate kinase, found in Synechococcus sp. (strain WH7803).